Consider the following 634-residue polypeptide: DNA-directed RNA polymerase subunit gamma (634 aa).

Positions 74, 76, 89, and 92 each coordinate Zn(2+). 3 residues coordinate Mg(2+): aspartate 471, aspartate 473, and aspartate 475.

This sequence belongs to the RNA polymerase beta' chain family. RpoC1 subfamily. In cyanobacteria the RNAP catalytic core is composed of 2 alpha, 1 beta, 1 beta', 1 gamma and 1 omega subunit. When a sigma factor is associated with the core the holoenzyme is formed, which can initiate transcription. Requires Mg(2+) as cofactor. It depends on Zn(2+) as a cofactor.

The catalysed reaction is RNA(n) + a ribonucleoside 5'-triphosphate = RNA(n+1) + diphosphate. Its function is as follows. DNA-dependent RNA polymerase catalyzes the transcription of DNA into RNA using the four ribonucleoside triphosphates as substrates. The protein is DNA-directed RNA polymerase subunit gamma of Prochlorococcus marinus (strain MIT 9312).